We begin with the raw amino-acid sequence, 660 residues long: Acetyl-coenzyme A synthetase (660 aa).

Residues 197-200 and threonine 317 each bind CoA; that span reads RGGK. ATP contacts are provided by residues 397 to 399, 421 to 426, aspartate 512, and arginine 528; these read GEP and DTWWQT. Residue serine 536 coordinates CoA. Arginine 539 is a binding site for ATP. Residues valine 550, histidine 552, and valine 555 each coordinate Mg(2+). An N6-acetyllysine modification is found at lysine 625.

Belongs to the ATP-dependent AMP-binding enzyme family. Requires Mg(2+) as cofactor. In terms of processing, acetylated. Deacetylation by the SIR2-homolog deacetylase activates the enzyme.

It catalyses the reaction acetate + ATP + CoA = acetyl-CoA + AMP + diphosphate. Catalyzes the conversion of acetate into acetyl-CoA (AcCoA), an essential intermediate at the junction of anabolic and catabolic pathways. AcsA undergoes a two-step reaction. In the first half reaction, AcsA combines acetate with ATP to form acetyl-adenylate (AcAMP) intermediate. In the second half reaction, it can then transfer the acetyl group from AcAMP to the sulfhydryl group of CoA, forming the product AcCoA. This is Acetyl-coenzyme A synthetase from Burkholderia lata (strain ATCC 17760 / DSM 23089 / LMG 22485 / NCIMB 9086 / R18194 / 383).